Consider the following 304-residue polypeptide: Ribosomal protein L11 methyltransferase (304 aa).

Residues T152, G173, D195, and N234 each contribute to the S-adenosyl-L-methionine site.

It belongs to the methyltransferase superfamily. PrmA family.

Its subcellular location is the cytoplasm. The enzyme catalyses L-lysyl-[protein] + 3 S-adenosyl-L-methionine = N(6),N(6),N(6)-trimethyl-L-lysyl-[protein] + 3 S-adenosyl-L-homocysteine + 3 H(+). Functionally, methylates ribosomal protein L11. The sequence is that of Ribosomal protein L11 methyltransferase from Cupriavidus metallidurans (strain ATCC 43123 / DSM 2839 / NBRC 102507 / CH34) (Ralstonia metallidurans).